We begin with the raw amino-acid sequence, 304 residues long: Cell surface-binding protein OPG105 (304 aa).

Residues 1–235 (MPQQLSPINI…NDDTQVYYSG (235 aa)) enclose the Alpha-carbonic anhydrase domain. At 1-275 (MPQQLSPINI…YQKYIEENKT (275 aa)) the chain is on the virion surface side. The chain crosses the membrane as a helical span at residues 276–294 (FAIIAIVFVFILTAILFFM). Topologically, residues 295 to 304 (SRRYSREKQN) are intravirion.

This sequence belongs to the alpha-carbonic anhydrase family. Homodimer; disulfide-linked. Apparently non-glycosylated.

The protein resides in the virion membrane. In terms of biological role, binds to chondroitin sulfate on the cell surface to provide virion attachment to target cell. The sequence is that of Cell surface-binding protein OPG105 (OPG105) from Homo sapiens (Human).